A 1071-amino-acid polypeptide reads, in one-letter code: MLDDDKGTAMHPHITPFTPEYSNELLRRVQDLYHEDIKHYYPQLKLEKLLDLLEHTEYLFELYLDSIHHDRPNDALTAFIIGCYYVFLIIPQSLQFQTRNKSYSIYTDLKKMYENEMNMTNVVLMVKKEIGVVLDESVKHGAGIEHRITKKRAFSVPADDLSGQVASLSLDTAAPQDHGLKGTFTEDDAEQSSPVWTAPNLEPNDQLKLALLPEVIPTPAFREPERKTSVPVRPSVLLEDVPSIYHEDDTSFASLNPPFREITADRSVTHRKDSYHSVYMVDSGNLKEDNDDLFNVENDGFIQSLDILQKQSIITAPELFSILSNRVEREKVLLIDLRIPQRSAINHIVAPNLVNVDPNLLWDKQTNTPIYKDDILEHLLKENENFINRNKFDYIVYYTDVKTFMTINFDYAFIFFYLMLTSQKTPLTTVPTTLLGGYEKWKKTLHSYAQEYHISIEDYLYRPYSQKARLQQEQQQQQQQPDSQDSFSAKESSTKVPEPPSWKPPDLPIRLRKRPPPPPPVSMPTTPEIPPPLPPKIMVHSQVSSISRKPPIPAKQHVKKEQLNSNEIIQRKRQHQHQHYDQQILQPQRAYNIPTIERSPNVYVSLSITGLRNLGNTCYINSMIQCLFAAKTFRTLFISSKYKSYLQPIRSNGSHYSPKLSNSLSMLFNKMYLNGGCSVVPTGFLKVINQLRPDLKIPDDQQDTQEFLMILLDRLHDELSDQQHVANDYPNLLLYNADALKVSNNEYKHWFDKNVIGNGISPIDDIFQGQMENSLQCKRCGYTTFNYSTFYVLSLAIPRRSMKLSKLGRSTEKRVKLEDCINMFTSDEVLSGENAWDCPRCGPTASVSTSVSALENEPSIVKSKKKKSRFFTLHTGTKRRHLDFFGDGITEGHNSNNNNTTIFERERSRSPFRMLGGSGKRSSSSTPFSTGGNDSNNSSDYKNKKLTTVKTINFVTLPKILVIHLSRFYYDLTKKNNTVVTYPLILNIILKNNDTMKYKLFGVVNHTGTLISGHYTSLVNKDLEHNVNIGRSKWYYFDDEVVKADRKHGSDKNLKISSSDVYVLFYERVYD.

The disordered stretch occupies residues 467-532 (KARLQQEQQQ…MPTTPEIPPP (66 aa)). A compositionally biased stretch (low complexity) spans 471-480 (QQEQQQQQQQ). Residues 481–495 (PDSQDSFSAKESSTK) are compositionally biased toward polar residues. Pro residues-rich tracts occupy residues 497–507 (PEPPSWKPPDL) and 516–532 (PPPP…IPPP). A USP domain is found at 609–1069 (TGLRNLGNTC…DVYVLFYERV (461 aa)). Residue Cys-618 is the Nucleophile of the active site. Positions 913-942 (RMLGGSGKRSSSSTPFSTGGNDSNNSSDYK) are disordered. Polar residues predominate over residues 920–932 (KRSSSSTPFSTGG). The active-site Proton acceptor is His-1014.

Belongs to the peptidase C19 family.

Its subcellular location is the cytoplasm. The catalysed reaction is Thiol-dependent hydrolysis of ester, thioester, amide, peptide and isopeptide bonds formed by the C-terminal Gly of ubiquitin (a 76-residue protein attached to proteins as an intracellular targeting signal).. Functionally, involved in the sorting of ubiquitinated cargo proteins at the multivesicular body (MVB). The chain is Ubiquitin carboxyl-terminal hydrolase 7 (UBP7) from Saccharomyces cerevisiae (strain ATCC 204508 / S288c) (Baker's yeast).